The sequence spans 104 residues: L-rhamnose mutarotase (104 aa).

Tyrosine 18 contacts substrate. The active-site Proton donor is the histidine 22. Substrate is bound by residues tyrosine 41 and 76–77 (WW).

Belongs to the rhamnose mutarotase family. As to quaternary structure, homodimer.

It is found in the cytoplasm. It catalyses the reaction alpha-L-rhamnose = beta-L-rhamnose. It participates in carbohydrate metabolism; L-rhamnose metabolism. In terms of biological role, involved in the anomeric conversion of L-rhamnose. The polypeptide is L-rhamnose mutarotase (Opitutus terrae (strain DSM 11246 / JCM 15787 / PB90-1)).